The primary structure comprises 206 residues: MSQANHNDTHNNIDDNINNHFNDSESLDTLDISASDNIDDEVLDGFYHREQLLSVMMATLDYIDERVKKGLILPYFDDIDTEQWQEKIKALDIYITDEDEGRELNLEARQKDYATNILSYPSDLPAAIIGLMPTLPLGELVICHAVMVREAAEQNKAAVQHINHLLVHGILHLLGFDHELGQAEQDEMERFEIEILAGLNIPNPYN.

Residues M1–H20 are disordered. Residues H168, H172, and H178 each coordinate Zn(2+).

Belongs to the endoribonuclease YbeY family. The cofactor is Zn(2+).

It localises to the cytoplasm. Its function is as follows. Single strand-specific metallo-endoribonuclease involved in late-stage 70S ribosome quality control and in maturation of the 3' terminus of the 16S rRNA. This chain is Endoribonuclease YbeY, found in Psychrobacter arcticus (strain DSM 17307 / VKM B-2377 / 273-4).